The primary structure comprises 1133 residues: DNA-directed RNA polymerase III subunit RPC2 (1133 aa).

Residue lysine 186 coordinates RNA. Arginine 195 is a binding site for DNA. Arginine 213 lines the RNA pocket. Aspartate 432 is a DNA binding site. The RNA site is built by glutamine 438 and glutamine 692. Aspartate 753 contributes to the Mg(2+) binding site. The RNA site is built by lysine 896, lysine 904, and lysine 1019. DNA-binding residues include arginine 1039, serine 1040, and arginine 1046. Positions 1080, 1083, 1092, and 1095 each coordinate Zn(2+). A C4-type zinc finger spans residues 1080-1095 (CGQCGLLGYSGWCHYC).

The protein belongs to the RNA polymerase beta chain family. In terms of assembly, component of the RNA polymerase III (Pol III) complex consisting of 17 subunits: a ten-subunit catalytic core composed of POLR3A/RPC1, POLR3B/RPC2, POLR1C/RPAC1, POLR1D/RPAC2, POLR3K/RPC10, POLR2E/RPABC1, POLR2F/RPABC2, POLR2H/RPABC3, POLR2K/RPABC4 and POLR2L/RPABC5; a mobile stalk composed of two subunits POLR3H/RPC8 and CRCP/RPC9, protruding from the core and functioning primarily in transcription initiation; and additional subunits homologous to general transcription factors of the RNA polymerase II machinery, POLR3C/RPC3-POLR3F/RPC6-POLR3G/RPC7 heterotrimer required for transcription initiation and POLR3D/RPC4-POLR3E/RPC5 heterodimer involved in both transcription initiation and termination. Mg(2+) is required as a cofactor.

It localises to the nucleus. Its subcellular location is the cytoplasm. It is found in the cytosol. It catalyses the reaction RNA(n) + a ribonucleoside 5'-triphosphate = RNA(n+1) + diphosphate. Its function is as follows. Catalytic core component of RNA polymerase III (Pol III), a DNA-dependent RNA polymerase which synthesizes small non-coding RNAs using the four ribonucleoside triphosphates as substrates. Synthesizes 5S rRNA, snRNAs, tRNAs and miRNAs from at least 500 distinct genomic loci. Pol III-mediated transcription cycle proceeds through transcription initiation, transcription elongation and transcription termination stages. During transcription initiation, Pol III is recruited to DNA promoters type I, II or III with the help of general transcription factors and other specific initiation factors. Once the polymerase has escaped from the promoter it enters the elongation phase during which RNA is actively polymerized, based on complementarity with the template DNA strand. Transcription termination involves the release of the RNA transcript and polymerase from the DNA. Forms Pol III active center together with the largest subunit POLR3A/RPC1. A single-stranded DNA template strand of the promoter is positioned within the central active site cleft of Pol III. Appends one nucleotide at a time to the 3' end of the nascent RNA, with POLR3A/RPC1 contributing a Mg(2+)-coordinating DxDGD motif, and POLR3B/RPC2 participating in the coordination of a second Mg(2+) ion and providing lysine residues believed to facilitate Watson-Crick base pairing between the incoming nucleotide and template base. Typically, Mg(2+) ions direct a 5' nucleoside triphosphate to form a phosphodiester bond with the 3' hydroxyl of the preceding nucleotide of the nascent RNA, with the elimination of pyrophosphate. Pol III plays a key role in sensing and limiting infection by intracellular bacteria and DNA viruses. Acts as a nuclear and cytosolic DNA sensor involved in innate immune response. Can sense non-self dsDNA that serves as template for transcription into dsRNA. The non-self RNA polymerase III transcripts, such as Epstein-Barr virus-encoded RNAs (EBERs) induce type I interferon and NF-kappa-B through the RIG-I pathway. This Homo sapiens (Human) protein is DNA-directed RNA polymerase III subunit RPC2.